Reading from the N-terminus, the 1349-residue chain is Membrane-associated phosphatidylinositol transfer protein 2 (1349 aa).

A disordered region spans residues Glu-262–Glu-344. The span at Lys-302–Arg-322 shows a compositional bias: low complexity. Phosphoserine occurs at positions 337, 341, 368, and 589. Positions Gly-618 to Gly-631 are enriched in gly residues. Residues Gly-618–Tyr-671 are disordered. Ser-644 carries the phosphoserine modification. Positions Gly-653–Asp-667 are enriched in basic and acidic residues. Phosphoserine is present on residues Ser-700, Ser-701, and Ser-702. Residues Phe-715–Arg-963 form the DDHD domain. Arg-828 is subject to Omega-N-methylarginine. The disordered stretch occupies residues Leu-876–Ala-900. The segment covering Ala-878–Pro-888 has biased composition (pro residues). At Ser-1277 the chain carries Phosphoserine. A disordered region spans residues Thr-1296–Ser-1326.

This sequence belongs to the PtdIns transfer protein family. PI transfer class IIA subfamily. As to quaternary structure, interacts with PTK2B via its C-terminus. Interacts with CPNE4 (via VWFA domain). As to expression, highly expressed in brain, heart, ovary, testis and thymus. Detected in small intestine, prostate, pancreas, skeletal muscle, liver, colon and placenta.

Its subcellular location is the endomembrane system. Catalyzes the transfer of phosphatidylinositol and phosphatidylcholine between membranes (in vitro). Binds calcium ions. The chain is Membrane-associated phosphatidylinositol transfer protein 2 (PITPNM2) from Homo sapiens (Human).